Reading from the N-terminus, the 839-residue chain is LPS-assembly protein LptD (839 aa).

Residues M1–S21 form the signal peptide.

Belongs to the LptD family. In terms of assembly, component of the lipopolysaccharide transport and assembly complex. Interacts with LptE and LptA.

Its subcellular location is the cell outer membrane. Its function is as follows. Together with LptE, is involved in the assembly of lipopolysaccharide (LPS) at the surface of the outer membrane. This Legionella pneumophila subsp. pneumophila (strain Philadelphia 1 / ATCC 33152 / DSM 7513) protein is LPS-assembly protein LptD.